The sequence spans 90 residues: Guanine nucleotide-binding protein subunit gamma (90 aa).

C86 carries S-palmitoyl cysteine lipidation. C87 carries the cysteine methyl ester modification. Residue C87 is the site of S-farnesyl cysteine attachment. The propeptide at 88 to 90 is removed in mature form; that stretch reads CIM.

This sequence belongs to the G protein gamma family. G proteins are composed of 3 units, alpha, beta and gamma.

It localises to the membrane. The sequence is that of Guanine nucleotide-binding protein subunit gamma from Eremothecium gossypii (strain ATCC 10895 / CBS 109.51 / FGSC 9923 / NRRL Y-1056) (Yeast).